Reading from the N-terminus, the 229-residue chain is Synaptogyrin-3 (229 aa).

An N-acetylmethionine modification is found at Met1. Residues 20 to 172 enclose the MARVEL domain; sequence FARRPQTLLR…LTVKALQRFR (153 aa). 4 helical membrane passes run 30–50, 70–90, 105–125, and 148–168; these read VASW…GYVN, FGVA…LLDV, VLLD…GFCF, and AAIA…VKAL. A compositionally biased stretch (polar residues) spans 209–219; that stretch reads QSPPFTETLDT. The segment at 209 to 229 is disordered; sequence QSPPFTETLDTSPKGYQVPAY.

The protein belongs to the synaptogyrin family. Interacts (via N-terminus) with SLC6A3 (via N-terminus). May interact with VMAT2. Expressed in brain and placenta.

The protein localises to the cytoplasmic vesicle. Its subcellular location is the secretory vesicle. It is found in the synaptic vesicle membrane. The protein resides in the synapse. Its function is as follows. May play a role in regulated exocytosis. May indirectly regulate the activity of the plasma membrane dopamine transporter SLC6A3 and thereby regulate dopamine transport back from the synaptic cleft into the presynaptic terminal. This chain is Synaptogyrin-3, found in Homo sapiens (Human).